The primary structure comprises 267 residues: Tryptophan synthase alpha chain (267 aa).

Active-site proton acceptor residues include Glu39 and Asp50.

The protein belongs to the TrpA family. In terms of assembly, tetramer of two alpha and two beta chains.

It carries out the reaction (1S,2R)-1-C-(indol-3-yl)glycerol 3-phosphate + L-serine = D-glyceraldehyde 3-phosphate + L-tryptophan + H2O. The protein operates within amino-acid biosynthesis; L-tryptophan biosynthesis; L-tryptophan from chorismate: step 5/5. Its function is as follows. The alpha subunit is responsible for the aldol cleavage of indoleglycerol phosphate to indole and glyceraldehyde 3-phosphate. The chain is Tryptophan synthase alpha chain from Helicobacter hepaticus (strain ATCC 51449 / 3B1).